Reading from the N-terminus, the 157-residue chain is Endoribonuclease YbeY (157 aa).

Residues His114, His118, and His124 each contribute to the Zn(2+) site.

This sequence belongs to the endoribonuclease YbeY family. The cofactor is Zn(2+).

The protein localises to the cytoplasm. In terms of biological role, single strand-specific metallo-endoribonuclease involved in late-stage 70S ribosome quality control and in maturation of the 3' terminus of the 16S rRNA. The sequence is that of Endoribonuclease YbeY from Klebsiella pneumoniae (strain 342).